The chain runs to 296 residues: 4-hydroxybenzoate octaprenyltransferase (296 aa).

8 consecutive transmembrane segments (helical) span residues 28–48, 52–72, 102–122, 146–166, 169–189, 219–239, 241–261, and 275–295; these read PIGI…AAEG, LSHV…GCAI, ALIL…CTNA, YYPQ…TFTA, GELP…TVGY, VIIL…GARF, LGGW…WEFW, and FLHN…DYAL.

This sequence belongs to the UbiA prenyltransferase family. The cofactor is Mg(2+).

Its subcellular location is the cell inner membrane. The enzyme catalyses all-trans-octaprenyl diphosphate + 4-hydroxybenzoate = 4-hydroxy-3-(all-trans-octaprenyl)benzoate + diphosphate. It functions in the pathway cofactor biosynthesis; ubiquinone biosynthesis. Catalyzes the prenylation of para-hydroxybenzoate (PHB) with an all-trans polyprenyl group. Mediates the second step in the final reaction sequence of ubiquinone-8 (UQ-8) biosynthesis, which is the condensation of the polyisoprenoid side chain with PHB, generating the first membrane-bound Q intermediate 3-octaprenyl-4-hydroxybenzoate. The chain is 4-hydroxybenzoate octaprenyltransferase from Pseudomonas fluorescens (strain ATCC BAA-477 / NRRL B-23932 / Pf-5).